An 805-amino-acid polypeptide reads, in one-letter code: Leucine--tRNA ligase (805 aa).

The short motif at 41–52 is the 'HIGH' region element; it reads PYPSGAGLHVGH. The short motif at 577-581 is the 'KMSKS' region element; that stretch reads KMSKS. ATP is bound at residue K580.

The protein belongs to the class-I aminoacyl-tRNA synthetase family.

The protein resides in the cytoplasm. The enzyme catalyses tRNA(Leu) + L-leucine + ATP = L-leucyl-tRNA(Leu) + AMP + diphosphate. This chain is Leucine--tRNA ligase, found in Staphylococcus aureus (strain JH1).